Here is a 155-residue protein sequence, read N- to C-terminus: Small ribosomal subunit protein uS7cz/uS7cy (155 aa).

It belongs to the universal ribosomal protein uS7 family. In terms of assembly, part of the 30S ribosomal subunit.

It localises to the plastid. It is found in the chloroplast. One of the primary rRNA binding proteins, it binds directly to 16S rRNA where it nucleates assembly of the head domain of the 30S subunit. In Ipomoea purpurea (Common morning glory), this protein is Small ribosomal subunit protein uS7cz/uS7cy (rps7-A).